A 447-amino-acid chain; its full sequence is UDP-glycosyltransferase 76E5 (447 aa).

UDP-alpha-D-glucose-binding positions include Ser-272, 324 to 326 (APQ), 341 to 349 (HCGWNSTLE), and 363 to 366 (NGEQ).

Belongs to the UDP-glycosyltransferase family.

This chain is UDP-glycosyltransferase 76E5 (UGT76E5), found in Arabidopsis thaliana (Mouse-ear cress).